Reading from the N-terminus, the 812-residue chain is Ribonucleoside-diphosphate reductase large subunit (812 aa).

Residues 12–103 (LYVIKRDGRQ…VSNLHKETKK (92 aa)) enclose the ATP-cone domain. Residues 16 to 17 (KR), 22 to 28 (EEVHFDK), Thr64, and Asp68 contribute to the ATP site. Positions 213 and 228 each coordinate GDP. Cys229 and Cys455 are joined by a disulfide. Residues 237–239 (DSI), Lys254, Arg267, and 274–275 (CG) each bind dTTP. Asn438 lines the GDP pocket. The Proton acceptor role is filled by Asn438. Cys440 serves as the catalytic Cysteine radical intermediate. GDP contacts are provided by residues Glu442 and 615-618 (TAST). The Proton acceptor role is filled by Glu442. Thr778 bears the Phosphothreonine mark. Phosphoserine is present on Ser782. The residue at position 786 (Tyr786) is a Phosphotyrosine.

The protein belongs to the ribonucleoside diphosphate reductase large chain family. As to quaternary structure, heterodimer of a large and a small subunit.

The enzyme catalyses a 2'-deoxyribonucleoside 5'-diphosphate + [thioredoxin]-disulfide + H2O = a ribonucleoside 5'-diphosphate + [thioredoxin]-dithiol. Its activity is regulated as follows. Under complex allosteric control mediated by deoxynucleoside triphosphates and ATP binding to separate specificity and activation sites on the M1 subunit. The type of nucleotide bound at the specificity site determines substrate preference. It seems probable that ATP makes the enzyme reduce CDP and UDP, dGTP favors ADP reduction and dTTP favors GDP reduction. Stimulated by ATP and inhibited by dATP binding to the activity site. Provides the precursors necessary for DNA synthesis. Catalyzes the biosynthesis of deoxyribonucleotides from the corresponding ribonucleotides. The sequence is that of Ribonucleoside-diphosphate reductase large subunit (RnrL) from Drosophila melanogaster (Fruit fly).